The following is a 295-amino-acid chain: MPGSLRKMPVWLPIVILLVAMASIQGGASLAKSLFPLVGAPGVTALRLALGTLILIAFFKPWRLRFAKEQRLPLLFYGVSLGGMNYLFYLSIQTVPLGIAVALEFTGPLAVALFSSRRPVDFVWVVLAVLGLWFLLPLGQDVSHVDLTGCALALGAGACWAIYILSGQRAGAEHGPATVAIGSLIAALIFVPIGALQAGEALWHWSVIPLGLAVAILSTALPYSLEMIALTRLPTRTFGTLMSMEPALAAVSGMIFLGETLTPIQLLALGAIIAASMGSTLTVRKESKIKELDIN.

Residues 1–9 (MPGSLRKMP) lie on the Cytoplasmic side of the membrane. The chain crosses the membrane as a helical span at residues 10 to 30 (VWLPIVILLVAMASIQGGASL). The EamA 1 domain maps to 30 to 135 (LAKSLFPLVG…VLAVLGLWFL (106 aa)). Residues 31-38 (AKSLFPLV) are Periplasmic-facing. Residues 39 to 59 (GAPGVTALRLALGTLILIAFF) traverse the membrane as a helical segment. At 60–71 (KPWRLRFAKEQR) the chain is on the cytoplasmic side. A helical membrane pass occupies residues 72 to 92 (LPLLFYGVSLGGMNYLFYLSI). Position 93 (Gln93) is a topological domain, periplasmic. Residues 94–114 (TVPLGIAVALEFTGPLAVALF) traverse the membrane as a helical segment. Topologically, residues 115–118 (SSRR) are cytoplasmic. Residues 119–139 (PVDFVWVVLAVLGLWFLLPLG) traverse the membrane as a helical segment. Over 140-146 (QDVSHVD) the chain is Periplasmic. A helical transmembrane segment spans residues 147–167 (LTGCALALGAGACWAIYILSG). The EamA 2 domain maps to 159-278 (CWAIYILSGQ…LGAIIAASMG (120 aa)). The Cytoplasmic segment spans residues 168-175 (QRAGAEHG). The chain crosses the membrane as a helical span at residues 176–196 (PATVAIGSLIAALIFVPIGAL). Topologically, residues 197-200 (QAGE) are periplasmic. The helical transmembrane segment at 201 to 221 (ALWHWSVIPLGLAVAILSTAL) threads the bilayer. Topologically, residues 222-237 (PYSLEMIALTRLPTRT) are cytoplasmic. The helical transmembrane segment at 238–258 (FGTLMSMEPALAAVSGMIFLG) threads the bilayer. Topologically, residues 259 to 262 (ETLT) are periplasmic. A helical membrane pass occupies residues 263 to 283 (PIQLLALGAIIAASMGSTLTV). Residues 284 to 295 (RKESKIKELDIN) are Cytoplasmic-facing.

It belongs to the drug/metabolite transporter (DMT) superfamily. 10 TMS drug/metabolite exporter (DME) (TC 2.A.7.3) family.

The protein resides in the cell inner membrane. Involved in the efflux of threonine and homoserine. The polypeptide is Threonine/homoserine exporter RhtA (rhtA) (Escherichia coli O157:H7).